Here is a 258-residue protein sequence, read N- to C-terminus: Large ribosomal subunit protein bL21 (258 aa).

Residues 140–159 show a composition bias toward basic and acidic residues; sequence KAKDAKDEAPKAAPKAEKKK. The tract at residues 140–181 is disordered; the sequence is KAKDAKDEAPKAAPKAEKKKAAPKKAKAEAAPAAADEGTRPA.

The protein belongs to the bacterial ribosomal protein bL21 family. Part of the 50S ribosomal subunit. Contacts protein L20.

Its function is as follows. This protein binds to 23S rRNA in the presence of protein L20. In Jannaschia sp. (strain CCS1), this protein is Large ribosomal subunit protein bL21.